We begin with the raw amino-acid sequence, 58 residues long: Ferredoxin-2 (58 aa).

4Fe-4S ferredoxin-type domains follow at residues 2-27 (IEVN…MNEE) and 30-58 (KAVV…IVRS). Cysteine 8 serves as a coordination point for [3Fe-4S] cluster. Residue cysteine 11 is modified to Cysteine methyl disulfide. Cysteine 14 lines the [3Fe-4S] cluster pocket. Residues cysteine 18 and cysteine 42 are joined by a disulfide bond. Cysteine 50 is a binding site for [3Fe-4S] cluster.

As to quaternary structure, homodimer (ferredoxin I) or homotetramer (ferredoxin II). The cofactor is [3Fe-4S] cluster. It depends on [4Fe-4S] cluster as a cofactor.

In terms of biological role, ferredoxins are iron-sulfur proteins that transfer electrons in a wide variety of metabolic reactions. The polypeptide is Ferredoxin-2 (Megalodesulfovibrio gigas (Desulfovibrio gigas)).